A 248-amino-acid chain; its full sequence is Probable transcriptional regulatory protein trd_1132 (248 aa).

The protein belongs to the TACO1 family.

It localises to the cytoplasm. This chain is Probable transcriptional regulatory protein trd_1132, found in Thermomicrobium roseum (strain ATCC 27502 / DSM 5159 / P-2).